Here is a 202-residue protein sequence, read N- to C-terminus: ATP-dependent Clp protease proteolytic subunit (202 aa).

Serine 101 (nucleophile) is an active-site residue. Histidine 126 is an active-site residue.

Belongs to the peptidase S14 family. In terms of assembly, component of the chloroplastic Clp protease core complex.

The protein localises to the plastid. Its subcellular location is the chloroplast stroma. The catalysed reaction is Hydrolysis of proteins to small peptides in the presence of ATP and magnesium. alpha-casein is the usual test substrate. In the absence of ATP, only oligopeptides shorter than five residues are hydrolyzed (such as succinyl-Leu-Tyr-|-NHMec, and Leu-Tyr-Leu-|-Tyr-Trp, in which cleavage of the -Tyr-|-Leu- and -Tyr-|-Trp bonds also occurs).. Cleaves peptides in various proteins in a process that requires ATP hydrolysis. Has a chymotrypsin-like activity. Plays a major role in the degradation of misfolded proteins. This is ATP-dependent Clp protease proteolytic subunit from Nuphar advena (Common spatterdock).